The sequence spans 361 residues: Probable S-adenosylmethionine-dependent methyltransferase At5g38780 (361 aa).

S-adenosyl-L-homocysteine is bound by residues Tyr-19, Cys-64, Asn-69, Asp-106, Leu-107, Ser-135, and Phe-136. Positions 174, 260, 262, and 263 each coordinate Mg(2+).

It belongs to the methyltransferase superfamily. Type-7 methyltransferase family. In terms of assembly, homodimer. Requires Mg(2+) as cofactor.

The sequence is that of Probable S-adenosylmethionine-dependent methyltransferase At5g38780 from Arabidopsis thaliana (Mouse-ear cress).